Consider the following 29-residue polypeptide: NAD-reducing hydrogenase HoxS subunit delta (29 aa).

The segment covering 1–11 has biased composition (basic and acidic residues); that stretch reads MKHSEKNEIAS. Residues 1 to 29 are disordered; the sequence is MKHSEKNEIASHELPTTPLDPVLAAGRES.

It belongs to the [NiFe]/[NiFeSe] hydrogenase small subunit family. Tetramer of an alpha and a gamma subunits (flavin-containing dimer), and a delta and a nickel-containing beta subunits (hydrogenase dimer). The cofactor is [4Fe-4S] cluster. [3Fe-4S] cluster serves as cofactor. It depends on [2Fe-2S] cluster as a cofactor. Requires FMN as cofactor. Ni(2+) is required as a cofactor.

It is found in the cytoplasm. The enzyme catalyses H2 + NAD(+) = NADH + H(+). The polypeptide is NAD-reducing hydrogenase HoxS subunit delta (hoxY) (Rhodococcus opacus (Nocardia opaca)).